Consider the following 284-residue polypeptide: Phosphonates import ATP-binding protein PhnC 2 (284 aa).

Positions 24 to 264 (IRIDGISVRR…LEARIFPSLA (241 aa)) constitute an ABC transporter domain. 56–63 (GPSGVGKT) serves as a coordination point for ATP.

It belongs to the ABC transporter superfamily. Phosphonates importer (TC 3.A.1.9.1) family. The complex is composed of two ATP-binding proteins (PhnC), two transmembrane proteins (PhnE) and a solute-binding protein (PhnD).

It is found in the cell inner membrane. It catalyses the reaction phosphonate(out) + ATP + H2O = phosphonate(in) + ADP + phosphate + H(+). Functionally, part of the ABC transporter complex PhnCDE involved in phosphonates import. Responsible for energy coupling to the transport system. This chain is Phosphonates import ATP-binding protein PhnC 2, found in Rhodopseudomonas palustris (strain ATCC BAA-98 / CGA009).